Consider the following 497-residue polypeptide: Cytochrome P450 71A18 (497 aa).

A helical transmembrane segment spans residues 4 to 24 (TLMVSLCLTTLLTLLLLKKFL). C439 contributes to the heme binding site.

The protein belongs to the cytochrome P450 family. Heme is required as a cofactor.

It is found in the membrane. The protein is Cytochrome P450 71A18 (CYP71A18) of Arabidopsis thaliana (Mouse-ear cress).